We begin with the raw amino-acid sequence, 256 residues long: Imidazole glycerol phosphate synthase subunit HisF (256 aa).

Active-site residues include Asp12 and Asp131.

The protein belongs to the HisA/HisF family. As to quaternary structure, heterodimer of HisH and HisF.

It localises to the cytoplasm. The catalysed reaction is 5-[(5-phospho-1-deoxy-D-ribulos-1-ylimino)methylamino]-1-(5-phospho-beta-D-ribosyl)imidazole-4-carboxamide + L-glutamine = D-erythro-1-(imidazol-4-yl)glycerol 3-phosphate + 5-amino-1-(5-phospho-beta-D-ribosyl)imidazole-4-carboxamide + L-glutamate + H(+). Its pathway is amino-acid biosynthesis; L-histidine biosynthesis; L-histidine from 5-phospho-alpha-D-ribose 1-diphosphate: step 5/9. Functionally, IGPS catalyzes the conversion of PRFAR and glutamine to IGP, AICAR and glutamate. The HisF subunit catalyzes the cyclization activity that produces IGP and AICAR from PRFAR using the ammonia provided by the HisH subunit. The polypeptide is Imidazole glycerol phosphate synthase subunit HisF (Stutzerimonas stutzeri (strain A1501) (Pseudomonas stutzeri)).